The primary structure comprises 1018 residues: Putative type I restriction enzyme MjaVIIIP endonuclease subunit (1018 aa).

The protein belongs to the HsdR family. As to quaternary structure, the type I restriction/modification system is composed of three polypeptides R, M and S.

The catalysed reaction is Endonucleolytic cleavage of DNA to give random double-stranded fragments with terminal 5'-phosphates, ATP is simultaneously hydrolyzed.. Functionally, the restriction (R) subunit of a type I restriction enzyme that recognizes 5'-GAYN(5)GTAA-3' and cleaves a random distance away. The R subunit is required for both endonuclease and ATPase activities but not for modification. After locating a non-methylated recognition site, the enzyme complex serves as a molecular motor that translocates DNA in an ATP-dependent manner until a collision occurs that triggers cleavage. The sequence is that of Putative type I restriction enzyme MjaVIIIP endonuclease subunit from Methanocaldococcus jannaschii (strain ATCC 43067 / DSM 2661 / JAL-1 / JCM 10045 / NBRC 100440) (Methanococcus jannaschii).